Consider the following 203-residue polypeptide: A-type ATP synthase subunit E (203 aa).

This sequence belongs to the V-ATPase E subunit family. As to quaternary structure, has multiple subunits with at least A(3), B(3), C, D, E, F, H, I and proteolipid K(x).

It localises to the cell membrane. Functionally, component of the A-type ATP synthase that produces ATP from ADP in the presence of a proton gradient across the membrane. The polypeptide is A-type ATP synthase subunit E (Methanococcus maripaludis (strain C6 / ATCC BAA-1332)).